The chain runs to 101 residues: Movement protein (101 aa).

The tract at residues 1–22 is disordered; the sequence is MDPQNSFLLQPRVPTAAPTSGG. A helical membrane pass occupies residues 30-50; it reads EVAILSFVGLICFYLLYLWVL. The segment at 79 to 101 is disordered; sequence NPIPNTQAPPSQGNPGPFVPGTG. Residues 80-92 are compositionally biased toward polar residues; sequence PIPNTQAPPSQGN.

Belongs to the mastrevirus movement protein family. As to quaternary structure, interacts with the capsid protein (CP). Part of a MP-CP-viral DNA complex.

The protein resides in the host membrane. In terms of biological role, involved in the viral transport within, and between cells. The chain is Movement protein from Avena sativa (Oat).